The primary structure comprises 446 residues: N-succinylarginine dihydrolase (446 aa).

Substrate-binding positions include 19–28, Asn-110, and 137–138; these read AGLSFGNVAS and HR. Glu-174 is an active-site residue. Substrate is bound at residue Arg-213. Residue His-249 is part of the active site. 2 residues coordinate substrate: Asp-251 and Asn-364. Residue Cys-370 is the Nucleophile of the active site.

The protein belongs to the succinylarginine dihydrolase family. Homodimer.

The catalysed reaction is N(2)-succinyl-L-arginine + 2 H2O + 2 H(+) = N(2)-succinyl-L-ornithine + 2 NH4(+) + CO2. Its pathway is amino-acid degradation; L-arginine degradation via AST pathway; L-glutamate and succinate from L-arginine: step 2/5. Catalyzes the hydrolysis of N(2)-succinylarginine into N(2)-succinylornithine, ammonia and CO(2). The polypeptide is N-succinylarginine dihydrolase (Paraburkholderia xenovorans (strain LB400)).